The primary structure comprises 299 residues: 4-hydroxy-tetrahydrodipicolinate synthase (299 aa).

Residue T51 coordinates pyruvate. Y139 serves as the catalytic Proton donor/acceptor. K167 functions as the Schiff-base intermediate with substrate in the catalytic mechanism. I209 is a pyruvate binding site.

It belongs to the DapA family. As to quaternary structure, homotetramer; dimer of dimers.

The protein resides in the cytoplasm. It carries out the reaction L-aspartate 4-semialdehyde + pyruvate = (2S,4S)-4-hydroxy-2,3,4,5-tetrahydrodipicolinate + H2O + H(+). It participates in amino-acid biosynthesis; L-lysine biosynthesis via DAP pathway; (S)-tetrahydrodipicolinate from L-aspartate: step 3/4. Functionally, catalyzes the condensation of (S)-aspartate-beta-semialdehyde [(S)-ASA] and pyruvate to 4-hydroxy-tetrahydrodipicolinate (HTPA). The protein is 4-hydroxy-tetrahydrodipicolinate synthase of Methylobacterium radiotolerans (strain ATCC 27329 / DSM 1819 / JCM 2831 / NBRC 15690 / NCIMB 10815 / 0-1).